The primary structure comprises 208 residues: Large ribosomal subunit protein uL4 (208 aa).

The tract at residues 45–96 (RQGTHKSKTRAEVRGGGRKPYRQKGTGNARQGSTRSPLMVGGGTIFGPTPHG) is disordered. Positions 69–80 (GTGNARQGSTRS) are enriched in polar residues.

The protein belongs to the universal ribosomal protein uL4 family. Part of the 50S ribosomal subunit.

Its function is as follows. One of the primary rRNA binding proteins, this protein initially binds near the 5'-end of the 23S rRNA. It is important during the early stages of 50S assembly. It makes multiple contacts with different domains of the 23S rRNA in the assembled 50S subunit and ribosome. Functionally, forms part of the polypeptide exit tunnel. This Chlorobium phaeovibrioides (strain DSM 265 / 1930) (Prosthecochloris vibrioformis (strain DSM 265)) protein is Large ribosomal subunit protein uL4.